The primary structure comprises 86 residues: uncharacterized protein (86 aa).

Helical transmembrane passes span 4 to 24 (ILII…IAAV), 34 to 54 (MGLV…ILIN), and 64 to 84 (DIAY…ARVL).

It to M.jannaschii MJ1223.

The protein resides in the cell membrane. This is an uncharacterized protein from Methanothermobacter thermautotrophicus (strain ATCC 29096 / DSM 1053 / JCM 10044 / NBRC 100330 / Delta H) (Methanobacterium thermoautotrophicum).